The sequence spans 89 residues: FMRFamide-like neuropeptides 19 (89 aa).

An N-terminal signal peptide occupies residues 1 to 20 (MSFQLTLFSMLFLLIAVVVG). A propeptide spanning residues 21-67 (QPIQSQNGDLKMQAVQDNSPLNMEAFNDDSALYDYLEQSDPSLKSME) is cleaved from the precursor. Phenylalanine 76 is subject to Phenylalanine amide. Residues 80 to 89 (ASWASSVRFG) constitute a propeptide that is removed on maturation.

Belongs to the FARP (FMRFamide related peptide) family. Each flp gene is expressed in a distinct set of neurons. Flp-19 is expressed in the URX interneurons, the serotonin and acetylcholine-expressing HSN neurons, and the AIN, AWA and BAG neurons.

The protein localises to the secreted. Functionally, FMRFamides and FMRFamide-like peptides are neuropeptides. WANQVRF-amide inhibits the activity of dissected pharyngeal myogenic muscle system. The protein is FMRFamide-like neuropeptides 19 of Caenorhabditis elegans.